A 96-amino-acid chain; its full sequence is Co-chaperonin GroES (96 aa).

It belongs to the GroES chaperonin family. As to quaternary structure, heptamer of 7 subunits arranged in a ring. Interacts with the chaperonin GroEL.

The protein resides in the cytoplasm. Together with the chaperonin GroEL, plays an essential role in assisting protein folding. The GroEL-GroES system forms a nano-cage that allows encapsulation of the non-native substrate proteins and provides a physical environment optimized to promote and accelerate protein folding. GroES binds to the apical surface of the GroEL ring, thereby capping the opening of the GroEL channel. The sequence is that of Co-chaperonin GroES from Polaromonas sp. (strain JS666 / ATCC BAA-500).